Consider the following 363-residue polypeptide: Peptide chain release factor 1 (363 aa).

Residue Gln-237 is modified to N5-methylglutamine. Over residues 284–296 (EDEKRRSAEESTR) the composition is skewed to basic and acidic residues. The segment at 284 to 305 (EDEKRRSAEESTRRSLVASGDR) is disordered.

Belongs to the prokaryotic/mitochondrial release factor family. Post-translationally, methylated by PrmC. Methylation increases the termination efficiency of RF1.

The protein resides in the cytoplasm. Peptide chain release factor 1 directs the termination of translation in response to the peptide chain termination codons UAG and UAA. This Shewanella sp. (strain MR-4) protein is Peptide chain release factor 1.